The sequence spans 289 residues: F-box protein PP2-A11 (289 aa).

Residues 23 to 69 (QPGLGDLPESCVALILQNLDPVEICRFSKLNTAFHGASWADFVWESK) form the F-box domain.

In terms of assembly, part of a SCF (ASK-cullin-F-box) protein ligase complex. Interacts with SKP1A/ASK1.

Its subcellular location is the nucleus. The protein operates within protein modification; protein ubiquitination. Component of SCF(ASK-cullin-F-box) E3 ubiquitin ligase complexes, which may mediate the ubiquitination and subsequent proteasomal degradation of target proteins. In Arabidopsis thaliana (Mouse-ear cress), this protein is F-box protein PP2-A11 (PP2A11).